The following is a 361-amino-acid chain: Cyclin-D3-3 (361 aa).

This sequence belongs to the cyclin family. Cyclin D subfamily.

Its function is as follows. Promotes divisions in the guard cells (GCs) after the guard mother cells (GMC) symmetric division. The protein is Cyclin-D3-3 (CYCD3-3) of Arabidopsis thaliana (Mouse-ear cress).